Reading from the N-terminus, the 176-residue chain is Cathelicidin-2 (176 aa).

Positions 1–29 (METQGASLSLGRWSLWLLLLGLVVPLASA) are cleaved as a signal peptide. Gln30 carries the pyrrolidone carboxylic acid modification. A propeptide spanning residues 30–130 (QALSYREAVL…DINCNELQSV (101 aa)) is cleaved from the precursor. 2 disulfide bridges follow: Cys85–Cys96 and Cys107–Cys124. The tract at residues 135–176 (PIRRPPIRPPFNPPFRPPVRPPFRPPFRPPFRPPIGPFPGRR) is disordered. The span at 141–176 (IRPPFNPPFRPPVRPPFRPPFRPPFRPPIGPFPGRR) shows a compositional bias: pro residues. Residue Pro173 is modified to Proline amide. Positions 174-176 (GRR) are cleaved as a propeptide — removed in mature form.

Belongs to the cathelicidin family. Post-translationally, elastase is responsible for its maturation.

Its subcellular location is the secreted. Functionally, binds to the lipid A moiety of bacterial lipopolysaccharides (LPS), a glycolipid present in the outer membrane of all Gram-negative bacteria. Shows a potent antimicrobial activity against the Gram-negative bacteria E.coli, S.typhimurium and P.aeruginosa. Less active against the Gram-positive bacteria S.aureus, L.monocytogenes and B.subtilis. In Capra hircus (Goat), this protein is Cathelicidin-2 (CATHL2).